A 1023-amino-acid chain; its full sequence is RTX-I toxin determinant A from serotypes 1/9 (1023 aa).

3 helical membrane-spanning segments follow: residues 226 to 256 (NNLP…ILSN), 297 to 326 (STTA…ADKF), and 367 to 406 (INSV…SGIL). Hemolysin-type calcium-binding repeat units lie at residues 730 to 747 (FGSR…DDEI), 748 to 765 (YGND…NDVI), 766 to 783 (HGGD…NDRL), 784 to 801 (IGGK…DDEL), 812 to 829 (LGGA…TNLF), and 830 to 847 (DGGV…KDIY).

This sequence belongs to the RTX prokaryotic toxin (TC 1.C.11) family. In terms of processing, palmitoylated by ApxIC. The toxin only becomes active when modified.

Its subcellular location is the secreted. It localises to the host cell membrane. One of the virulence factors of A.pleuropneumoniae, which has a strong hemolytic activity and is cytotoxic for alveolar macrophages and neutrophils. The sequence is that of RTX-I toxin determinant A from serotypes 1/9 (apxIA) from Actinobacillus pleuropneumoniae (Haemophilus pleuropneumoniae).